Consider the following 155-residue polypeptide: Ribonuclease H (155 aa).

Residues D4–Q145 form the RNase H type-1 domain. Mg(2+) is bound by residues D13, E51, D73, and D137.

This sequence belongs to the RNase H family. As to quaternary structure, monomer. Mg(2+) is required as a cofactor.

It is found in the cytoplasm. It catalyses the reaction Endonucleolytic cleavage to 5'-phosphomonoester.. In terms of biological role, endonuclease that specifically degrades the RNA of RNA-DNA hybrids. This Rickettsia bellii (strain RML369-C) protein is Ribonuclease H.